The primary structure comprises 295 residues: UDP-N-acetylenolpyruvoylglucosamine reductase (295 aa).

The region spanning 23–188 (QVGGPADFLA…ISAKFALKPG (166 aa)) is the FAD-binding PCMH-type domain. The active site involves R167. S217 serves as the catalytic Proton donor. E287 is a catalytic residue.

Belongs to the MurB family. It depends on FAD as a cofactor.

It localises to the cytoplasm. It catalyses the reaction UDP-N-acetyl-alpha-D-muramate + NADP(+) = UDP-N-acetyl-3-O-(1-carboxyvinyl)-alpha-D-glucosamine + NADPH + H(+). It participates in cell wall biogenesis; peptidoglycan biosynthesis. In terms of biological role, cell wall formation. The chain is UDP-N-acetylenolpyruvoylglucosamine reductase from Streptococcus equi subsp. zooepidemicus (strain H70).